The following is a 555-amino-acid chain: Formate--tetrahydrofolate ligase (555 aa).

64-71 provides a ligand contact to ATP; the sequence is TKAGIGKT.

The protein belongs to the formate--tetrahydrofolate ligase family.

It catalyses the reaction (6S)-5,6,7,8-tetrahydrofolate + formate + ATP = (6R)-10-formyltetrahydrofolate + ADP + phosphate. The protein operates within one-carbon metabolism; tetrahydrofolate interconversion. This chain is Formate--tetrahydrofolate ligase, found in Parabacteroides distasonis (strain ATCC 8503 / DSM 20701 / CIP 104284 / JCM 5825 / NCTC 11152).